Consider the following 393-residue polypeptide: Ornithine decarboxylase 2 (393 aa).

At K62 the chain carries N6-(pyridoxal phosphate)lysine. Pyridoxal 5'-phosphate contacts are provided by residues S194, G231, and 265 to 268; that span reads EPGR. A substrate-binding site is contributed by 314–315; that stretch reads YY. C343 acts as the Proton donor; shared with dimeric partner in catalysis. Residue D344 coordinates substrate. Y371 is a binding site for pyridoxal 5'-phosphate.

Belongs to the Orn/Lys/Arg decarboxylase class-II family. Homodimer. Only the dimer is catalytically active, as the active sites are constructed of residues from both monomers. The cofactor is pyridoxal 5'-phosphate.

The enzyme catalyses L-ornithine + H(+) = putrescine + CO2. Its pathway is amine and polyamine biosynthesis; putrescine biosynthesis via L-ornithine pathway; putrescine from L-ornithine: step 1/1. With respect to regulation, inhibited by antizyme (AZ) in response to polyamine levels. AZ inhibits the assembly of the functional homodimer by binding to ODC monomers and targeting them for ubiquitin-independent proteolytic destruction by the 26S proteasome. Catalyzes the first and rate-limiting step of polyamine biosynthesis that converts ornithine into putrescine, which is the precursor for the polyamines, spermidine and spermine. Polyamines are essential for cell proliferation and are implicated in cellular processes, ranging from DNA replication to apoptosis. This is Ornithine decarboxylase 2 (Odc2) from Drosophila melanogaster (Fruit fly).